A 69-amino-acid polypeptide reads, in one-letter code: Protein translocase subunit SecE (69 aa).

Residues 43–63 (GLGICLLGFVGFVIHVPITYL) form a helical membrane-spanning segment.

It belongs to the SecE/SEC61-gamma family. In terms of assembly, component of the Sec protein translocase complex. Heterotrimer consisting of SecY (alpha), SecG (beta) and SecE (gamma) subunits. The heterotrimers can form oligomers, although 1 heterotrimer is thought to be able to translocate proteins. Interacts with the ribosome. May interact with SecDF, and other proteins may be involved.

The protein localises to the cell membrane. Essential subunit of the Sec protein translocation channel SecYEG. Clamps together the 2 halves of SecY. May contact the channel plug during translocation. The protein is Protein translocase subunit SecE of Methanococcus maripaludis (strain DSM 14266 / JCM 13030 / NBRC 101832 / S2 / LL).